The sequence spans 476 residues: Probable cytosolic Fe-S cluster assembly factor GF22738 (476 aa).

[4Fe-4S] cluster-binding residues include Cys23, Cys68, Cys71, Cys74, Cys187, Cys243, Cys395, and Cys399.

Belongs to the NARF family.

Its function is as follows. Component of the cytosolic iron-sulfur (Fe/S) protein assembly machinery. Required for maturation of extramitochondrial Fe/S proteins. The sequence is that of Probable cytosolic Fe-S cluster assembly factor GF22738 from Drosophila ananassae (Fruit fly).